Reading from the N-terminus, the 435-residue chain is 3-phosphoshikimate 1-carboxyvinyltransferase (435 aa).

Residues K21, S22, and R26 each contribute to the 3-phosphoshikimate site. K21 lines the phosphoenolpyruvate pocket. Residues G98 and R126 each coordinate phosphoenolpyruvate. Positions 169, 170, 171, 197, 312, and 339 each coordinate 3-phosphoshikimate. A phosphoenolpyruvate-binding site is contributed by Q171. The active-site Proton acceptor is D312. 3 residues coordinate phosphoenolpyruvate: R343, R386, and K412.

This sequence belongs to the EPSP synthase family. As to quaternary structure, monomer.

The protein localises to the cytoplasm. It catalyses the reaction 3-phosphoshikimate + phosphoenolpyruvate = 5-O-(1-carboxyvinyl)-3-phosphoshikimate + phosphate. It functions in the pathway metabolic intermediate biosynthesis; chorismate biosynthesis; chorismate from D-erythrose 4-phosphate and phosphoenolpyruvate: step 6/7. Functionally, catalyzes the transfer of the enolpyruvyl moiety of phosphoenolpyruvate (PEP) to the 5-hydroxyl of shikimate-3-phosphate (S3P) to produce enolpyruvyl shikimate-3-phosphate and inorganic phosphate. The chain is 3-phosphoshikimate 1-carboxyvinyltransferase from Clostridium beijerinckii (strain ATCC 51743 / NCIMB 8052) (Clostridium acetobutylicum).